A 136-amino-acid chain; its full sequence is Small ribosomal subunit protein eS8 (136 aa).

The disordered stretch occupies residues 1-23 (MGVYHGNDLKKPTGGKKRPHQKV). Basic residues predominate over residues 13-23 (TGGKKRPHQKV).

Belongs to the eukaryotic ribosomal protein eS8 family. In terms of assembly, part of the 30S ribosomal subunit.

In Hyperthermus butylicus (strain DSM 5456 / JCM 9403 / PLM1-5), this protein is Small ribosomal subunit protein eS8.